A 395-amino-acid chain; its full sequence is LIM/homeobox protein Lhx3 (395 aa).

LIM zinc-binding domains follow at residues 28-78 (CAGC…CKED) and 87-141 (CAAC…CKAD). Positions 154–213 (AKRPRTTITAKQLETLKNAYNNSPKPARHVREQLSSETGLDMRVVQVWFQNRRAKEKRLK) form a DNA-binding region, homeobox. Disordered stretches follow at residues 209–325 (EKRL…LQAL) and 348–395 (GGQG…HAQF). Polar residues predominate over residues 257–276 (DEPSMSEMSHSNGIYSNLSE).

It is found in the nucleus. Its function is as follows. Transcription factor. Defines subclasses of motoneurons that segregate into columns in the spinal cord and select distinct axon pathways. Acts in conjunction with LIM-1, ISL-1 and ISL-2. This chain is LIM/homeobox protein Lhx3 (LHX3), found in Gallus gallus (Chicken).